A 452-amino-acid chain; its full sequence is Mitochondrial distribution and morphology protein 10 (452 aa).

This sequence belongs to the MDM10 family. As to quaternary structure, component of the ER-mitochondria encounter structure (ERMES) or MDM complex, composed of MMM1, MDM10, MDM12 and MDM34. Associates with the mitochondrial outer membrane sorting assembly machinery SAM(core) complex.

It is found in the mitochondrion outer membrane. Component of the ERMES/MDM complex, which serves as a molecular tether to connect the endoplasmic reticulum and mitochondria. Components of this complex are involved in the control of mitochondrial shape and protein biogenesis and may function in phospholipid exchange. MDM10 is involved in the late assembly steps of the general translocase of the mitochondrial outer membrane (TOM complex). Functions in the TOM40-specific route of the assembly of outer membrane beta-barrel proteins, including the association of TOM40 with the receptor TOM22 and small TOM proteins. Can associate with the SAM(core) complex as well as the MDM12-MMM1 complex, both involved in late steps of the major beta-barrel assembly pathway, that is responsible for biogenesis of all outer membrane beta-barrel proteins. May act as a switch that shuttles between both complexes and channels precursor proteins into the TOM40-specific pathway. Plays a role in mitochondrial morphology and in the inheritance of mitochondria. The chain is Mitochondrial distribution and morphology protein 10 from Kluyveromyces lactis (strain ATCC 8585 / CBS 2359 / DSM 70799 / NBRC 1267 / NRRL Y-1140 / WM37) (Yeast).